Reading from the N-terminus, the 218-residue chain is Orotate phosphoribosyltransferase (218 aa).

5-phospho-alpha-D-ribose 1-diphosphate is bound at residue Lys26. An orotate-binding site is contributed by 34–35 (FF). Residues 72–73 (YK), Arg99, Lys100, Lys103, His105, and 124–132 (DDVITAGTA) contribute to the 5-phospho-alpha-D-ribose 1-diphosphate site. Positions 128 and 156 each coordinate orotate.

It belongs to the purine/pyrimidine phosphoribosyltransferase family. PyrE subfamily. Homodimer. The cofactor is Mg(2+).

The enzyme catalyses orotidine 5'-phosphate + diphosphate = orotate + 5-phospho-alpha-D-ribose 1-diphosphate. Its pathway is pyrimidine metabolism; UMP biosynthesis via de novo pathway; UMP from orotate: step 1/2. Its function is as follows. Catalyzes the transfer of a ribosyl phosphate group from 5-phosphoribose 1-diphosphate to orotate, leading to the formation of orotidine monophosphate (OMP). This is Orotate phosphoribosyltransferase from Hamiltonella defensa subsp. Acyrthosiphon pisum (strain 5AT).